Consider the following 52-residue polypeptide: Rubredoxin-2 (52 aa).

In terms of domain architecture, Rubredoxin-like spans 1-52; the sequence is MEQWKCNICGYIYNPETGDPEGDIPAGTSFESLPDSWMCPVCGAGKEEFTKI. Residues Cys6, Cys9, Cys39, and Cys42 each coordinate Fe cation.

It belongs to the rubredoxin family. As to quaternary structure, monomer. Fe(3+) is required as a cofactor.

Its function is as follows. Serves as an electron acceptor for pyruvate ferredoxin oxidoreductase (PFOR). The protein is Rubredoxin-2 (rub2) of Chlorobaculum tepidum (strain ATCC 49652 / DSM 12025 / NBRC 103806 / TLS) (Chlorobium tepidum).